The following is a 73-amino-acid chain: Defensin-like protein 34 (73 aa).

An N-terminal signal peptide occupies residues 1-25; it reads MASNKVSFFLVLCLCVLSTAEFGEA. 3 disulfides stabilise this stretch: Cys33–Cys59, Cys45–Cys68, and Cys49–Cys70.

The protein belongs to the DEFL family.

The protein localises to the secreted. The polypeptide is Defensin-like protein 34 (Arabidopsis thaliana (Mouse-ear cress)).